Consider the following 449-residue polypeptide: Heterogeneous nuclear ribonucleoprotein H2 (449 aa).

Met1 is subject to N-acetylmethionine. Met2 carries the post-translational modification N-acetylmethionine; in Heterogeneous nuclear ribonucleoprotein H2, N-terminally processed. In terms of domain architecture, RRM 1 spans 11 to 90 (FVVKVRGLPW…RYVEVFKSNS (80 aa)). Position 23 is a phosphoserine (Ser23). A Glycyl lysine isopeptide (Lys-Gly) (interchain with G-Cter in SUMO2) cross-link involves residue Lys35. Phosphoserine occurs at positions 54 and 63. Lys87 participates in a covalent cross-link: Glycyl lysine isopeptide (Lys-Gly) (interchain with G-Cter in SUMO2). A Phosphoserine modification is found at Ser90. Residue Lys98 forms a Glycyl lysine isopeptide (Lys-Gly) (interchain with G-Cter in SUMO2) linkage. The RRM 2 domain occupies 111 to 188 (GFVRLRGLPF…RYIEIFKSSR (78 aa)). At Arg233 the chain carries Dimethylated arginine; alternate. At Arg233 the chain carries Omega-N-methylarginine; alternate. The 1-1 repeat unit spans residues 234–249 (GAYGGGYGGYDDYGGY). The interval 234 to 433 (GAYGGGYGGY…YGGQSSMSGY (200 aa)) is 2 X 16 AA Gly-rich approximate repeats. A Phosphotyrosine modification is found at Tyr246. Positions 289-364 (HCVHMRGLPY…RYVELFLNST (76 aa)) constitute an RRM 3 domain. Ser310 bears the Phosphoserine mark. 3 repeat units span residues 354 to 372 (HRYV…GGAY), 374 to 392 (HSYV…GGAY), and 418 to 433 (GGYG…MSGY). The interval 354–392 (HRYVELFLNSTAGTSGGAYDHSYVELFLNSTAGASGGAY) is 2 X 19 AA perfect repeats.

Component of a ribonucleoprotein complex containing mRNAs and RNA-binding proteins including DDX5, HNRNPH2 and SRSF1 as well as splicing regulator ARVCF. Interacts with TXNL4/DIM1. Expressed ubiquitously.

The protein resides in the nucleus. Its subcellular location is the nucleoplasm. Functionally, this protein is a component of the heterogeneous nuclear ribonucleoprotein (hnRNP) complexes which provide the substrate for the processing events that pre-mRNAs undergo before becoming functional, translatable mRNAs in the cytoplasm. Binds poly(RG). The sequence is that of Heterogeneous nuclear ribonucleoprotein H2 (HNRNPH2) from Homo sapiens (Human).